We begin with the raw amino-acid sequence, 238 residues long: LRRN4 C-terminal-like protein (238 aa).

The N-terminal stretch at 1 to 22 (MLGSPCLLWLLAVTFLVPRAQP) is a signal peptide. The Extracellular segment spans residues 23 to 194 (LAPQDFEEEE…RLAVPPNPRT (172 aa)). Residues 82–176 (PPDPPRMGEV…AGGEGLEGAD (95 aa)) enclose the Fibronectin type-III domain. An N-linked (GlcNAc...) asparagine glycan is attached at N132. The helical transmembrane segment at 195–215 (LVHAAVGVGTALALLSCAALV) threads the bilayer. The Cytoplasmic portion of the chain corresponds to 216 to 238 (WHFCLRDRWGCPRRAAARAAGAL).

The protein localises to the membrane. The polypeptide is LRRN4 C-terminal-like protein (LRRN4CL) (Homo sapiens (Human)).